A 366-amino-acid polypeptide reads, in one-letter code: Carbamoyl phosphate synthase small chain (366 aa).

Residues 1–171 (MLEKRYLVLE…KTPYVSTGSD (171 aa)) are CPSase. The L-glutamine site is built by Ser-47, Gly-221, and Gly-223. Positions 173–360 (SVVLLDFGKK…ITMMKDFKEK (188 aa)) constitute a Glutamine amidotransferase type-1 domain. Cys-248 serves as the catalytic Nucleophile. L-glutamine-binding residues include Leu-249, Gln-252, Asn-290, Gly-292, and Tyr-293. Active-site residues include His-333 and Glu-335.

Belongs to the CarA family. As to quaternary structure, composed of two chains; the small (or glutamine) chain promotes the hydrolysis of glutamine to ammonia, which is used by the large (or ammonia) chain to synthesize carbamoyl phosphate. Tetramer of heterodimers (alpha,beta)4.

It carries out the reaction hydrogencarbonate + L-glutamine + 2 ATP + H2O = carbamoyl phosphate + L-glutamate + 2 ADP + phosphate + 2 H(+). It catalyses the reaction L-glutamine + H2O = L-glutamate + NH4(+). It participates in amino-acid biosynthesis; L-arginine biosynthesis; carbamoyl phosphate from bicarbonate: step 1/1. The protein operates within pyrimidine metabolism; UMP biosynthesis via de novo pathway; (S)-dihydroorotate from bicarbonate: step 1/3. Its function is as follows. Small subunit of the glutamine-dependent carbamoyl phosphate synthetase (CPSase). CPSase catalyzes the formation of carbamoyl phosphate from the ammonia moiety of glutamine, carbonate, and phosphate donated by ATP, constituting the first step of 2 biosynthetic pathways, one leading to arginine and/or urea and the other to pyrimidine nucleotides. The small subunit (glutamine amidotransferase) binds and cleaves glutamine to supply the large subunit with the substrate ammonia. This is Carbamoyl phosphate synthase small chain from Staphylococcus epidermidis (strain ATCC 35984 / DSM 28319 / BCRC 17069 / CCUG 31568 / BM 3577 / RP62A).